Consider the following 539-residue polypeptide: T-complex protein 1 subunit delta (539 aa).

Residues 1-28 (MPENVASRSGPPAAGPGNRGKGAYQDRD) are disordered. The residue at position 19 (R19) is an Omega-N-methylarginine. K21 is subject to N6-acetyllysine. At S36 the chain carries Phosphoserine. G53 is an ADP binding site. G53 contributes to the ATP binding site. A Mg(2+)-binding site is contributed by D104. Positions 105, 106, 107, 108, 172, 173, and 174 each coordinate ADP. Positions 105 and 106 each coordinate ATP. K174 serves as a coordination point for ATP. Phosphoserine is present on residues S184 and S202. N6-acetyllysine is present on residues K288, K302, K319, and K326. Residue G425 coordinates ADP. S444 is subject to Phosphoserine. ADP is bound at residue Q510.

This sequence belongs to the TCP-1 chaperonin family. In terms of assembly, component of the chaperonin-containing T-complex (TRiC), a hexadecamer composed of two identical back-to-back stacked rings enclosing a protein folding chamber. Each ring is made up of eight different subunits: TCP1/CCT1, CCT2, CCT3, CCT4, CCT5, CCT6A/CCT6, CCT7, CCT8. Interacts with PACRG. Interacts with DNAAF4. Interacts with DLEC1.

Its subcellular location is the cytoplasm. It is found in the melanosome. The protein localises to the cytoskeleton. The protein resides in the microtubule organizing center. It localises to the centrosome. Its subcellular location is the cilium basal body. It carries out the reaction ATP + H2O = ADP + phosphate + H(+). In terms of biological role, component of the chaperonin-containing T-complex (TRiC), a molecular chaperone complex that assists the folding of actin, tubulin and other proteins upon ATP hydrolysis. The TRiC complex mediates the folding of WRAP53/TCAB1, thereby regulating telomere maintenance. As part of the TRiC complex may play a role in the assembly of BBSome, a complex involved in ciliogenesis regulating transports vesicles to the cilia. This Rattus norvegicus (Rat) protein is T-complex protein 1 subunit delta (Cct4).